The chain runs to 352 residues: MSGNSFGKLFTVTTAGESHGPALVAIVDGCPAGLSLTEADIQPDIDRRKTGKSRFTSQRRESDQVKILSGVFEGVTTGTPIALLIENADQRPRDYSQIKDLFRPGHGDYTYFKKYGFRDYRGGGRASARETVMRVAAGAIAKKYLREKVNLTIQGYTAAVGAIRAERIDLSAVEKNPFFFPDEVQIPHLEQLIMKLRRDGDSIGARLNVIAKGVPCGLGEPVFDKLDADIASAMMGINAVKGVEIGDGFAVVEQKGSFHRDELSKKGFLSNHAGGTLAGISSGQDILVSLAFKPASSIRIPGKTLDINGKAVEVVTTGRHDPCVGLRAVPIAEAMLALVLMDHYLRYKAQRG.

2 residues coordinate NADP(+): Arg48 and Arg54. Residues Arg125 to Ser127, Asn238 to Ala239, Ala278, Lys293 to Ser297, and Arg319 contribute to the FMN site.

This sequence belongs to the chorismate synthase family. As to quaternary structure, homotetramer. FMNH2 serves as cofactor.

It carries out the reaction 5-O-(1-carboxyvinyl)-3-phosphoshikimate = chorismate + phosphate. It functions in the pathway metabolic intermediate biosynthesis; chorismate biosynthesis; chorismate from D-erythrose 4-phosphate and phosphoenolpyruvate: step 7/7. Functionally, catalyzes the anti-1,4-elimination of the C-3 phosphate and the C-6 proR hydrogen from 5-enolpyruvylshikimate-3-phosphate (EPSP) to yield chorismate, which is the branch point compound that serves as the starting substrate for the three terminal pathways of aromatic amino acid biosynthesis. This reaction introduces a second double bond into the aromatic ring system. The sequence is that of Chorismate synthase from Coxiella burnetii (strain RSA 493 / Nine Mile phase I).